Consider the following 483-residue polypeptide: Probable cytochrome P450 517A4 (483 aa).

A helical membrane pass occupies residues 1–21 (MEIVNVLLFLIILFLVKDFVK). C429 serves as a coordination point for heme.

The protein belongs to the cytochrome P450 family. Heme serves as cofactor.

It localises to the membrane. The polypeptide is Probable cytochrome P450 517A4 (cyp517A4) (Dictyostelium discoideum (Social amoeba)).